The sequence spans 367 residues: UDP-N-acetylglucosamine--N-acetylmuramyl-(pentapeptide) pyrophosphoryl-undecaprenol N-acetylglucosamine transferase (367 aa).

UDP-N-acetyl-alpha-D-glucosamine-binding positions include 18–20 (TGG), Asn130, Arg170, Ser196, Ile252, 271–276 (ALTVSE), and Gln297.

It belongs to the glycosyltransferase 28 family. MurG subfamily.

The protein localises to the cell inner membrane. The enzyme catalyses di-trans,octa-cis-undecaprenyl diphospho-N-acetyl-alpha-D-muramoyl-L-alanyl-D-glutamyl-meso-2,6-diaminopimeloyl-D-alanyl-D-alanine + UDP-N-acetyl-alpha-D-glucosamine = di-trans,octa-cis-undecaprenyl diphospho-[N-acetyl-alpha-D-glucosaminyl-(1-&gt;4)]-N-acetyl-alpha-D-muramoyl-L-alanyl-D-glutamyl-meso-2,6-diaminopimeloyl-D-alanyl-D-alanine + UDP + H(+). It participates in cell wall biogenesis; peptidoglycan biosynthesis. Cell wall formation. Catalyzes the transfer of a GlcNAc subunit on undecaprenyl-pyrophosphoryl-MurNAc-pentapeptide (lipid intermediate I) to form undecaprenyl-pyrophosphoryl-MurNAc-(pentapeptide)GlcNAc (lipid intermediate II). In Shewanella frigidimarina (strain NCIMB 400), this protein is UDP-N-acetylglucosamine--N-acetylmuramyl-(pentapeptide) pyrophosphoryl-undecaprenol N-acetylglucosamine transferase.